The following is a 103-amino-acid chain: Integration host factor subunit alpha (103 aa).

The tract at residues 50–72 is disordered; that stretch reads GNFNLRDKGERPGRNPKTGEEIP. Positions 54–69 are enriched in basic and acidic residues; it reads LRDKGERPGRNPKTGE.

Belongs to the bacterial histone-like protein family. In terms of assembly, heterodimer of an alpha and a beta chain.

In terms of biological role, this protein is one of the two subunits of integration host factor, a specific DNA-binding protein that functions in genetic recombination as well as in transcriptional and translational control. This is Integration host factor subunit alpha from Coxiella burnetii (strain CbuK_Q154) (Coxiella burnetii (strain Q154)).